We begin with the raw amino-acid sequence, 118 residues long: Appetite-regulating hormone (118 aa).

A signal peptide spans 1 to 24 (MPSTGTICSLLLLSVLLMADLAMA). Residue Ser-27 is the site of O-decanoyl serine; alternate attachment. Ser-27 carries O-hexanoyl serine; alternate lipidation. Ser-27 carries O-octanoyl serine; alternate lipidation. The tract at residues 29–50 (LSPEHQKVQQRKESKKPAAKLK) is disordered. Over residues 32–44 (EHQKVQQRKESKK) the composition is skewed to basic and acidic residues. Residues 53–76 (ALEGWLGPEDSGEVEGTEDKLEIR) constitute a propeptide, removed in mature form. Leu-99 is subject to Leucine amide. Residues 100-118 (GKFLQDILWEEVTEAPADK) constitute a propeptide, removed in mature form.

Belongs to the motilin family. In terms of processing, O-octanoylated by GOAT/MBOAT4. O-octanoylation is essential for ghrelin activity. Post-translationally, amidation of Leu-99 is essential for obestatin activity.

Its subcellular location is the secreted. Functionally, ghrelin is the ligand for growth hormone secretagogue receptor type 1 (GHSR). Induces the release of growth hormone from the pituitary. Has an appetite-stimulating effect, induces adiposity and stimulates gastric acid secretion. Involved in growth regulation. In terms of biological role, obestatin may be the ligand for GPR39. May have an appetite-reducing effect resulting in decreased food intake. May reduce gastric emptying activity and jejunal motility. This Sus scrofa (Pig) protein is Appetite-regulating hormone (GHRL).